Consider the following 308-residue polypeptide: Methionine synthase (308 aa).

His-201, Cys-203, Glu-224, and Cys-285 together coordinate Zn(2+).

This sequence belongs to the archaeal MetE family. Requires Zn(2+) as cofactor.

It functions in the pathway amino-acid biosynthesis; L-methionine biosynthesis via de novo pathway. Functionally, catalyzes the transfer of a methyl group to L-homocysteine resulting in methionine formation. Can use methylcobalamin and methylcobinamide as methyl donors, but methylcobalamin is not considered to be the physiological substrate. In Methanothermobacter thermautotrophicus (strain ATCC 29096 / DSM 1053 / JCM 10044 / NBRC 100330 / Delta H) (Methanobacterium thermoautotrophicum), this protein is Methionine synthase.